A 132-amino-acid chain; its full sequence is Small ribosomal subunit protein uS8 (132 aa).

The protein belongs to the universal ribosomal protein uS8 family. Part of the 30S ribosomal subunit. Contacts proteins S5 and S12.

Functionally, one of the primary rRNA binding proteins, it binds directly to 16S rRNA central domain where it helps coordinate assembly of the platform of the 30S subunit. The protein is Small ribosomal subunit protein uS8 of Rhodopseudomonas palustris (strain HaA2).